The primary structure comprises 703 residues: Centrosomal protein of 63 kDa (703 aa).

M1 carries the N-acetylmethionine modification. 4 coiled-coil regions span residues 22 to 199, 242 to 306, 353 to 533, and 676 to 703; these read EAEL…ESVE, MTVL…QHAV, LEGS…STQM, and HILERLDAHIEELKRESEKTVRQFTALK. Position 278 is a phosphoserine (S278).

It belongs to the CEP63 family. In terms of assembly, interacts with CEP152 and CDK1; these interactions recruit both ligands to centrosomes. Interacts with CDK2, CDK5RAP2, WDR62, CEP90, KIAA0753/moonraker and CCDC14. CEP63, CDK5RAP2, CEP152, WDR62 are proposed to form a stepwise assembled complex at the centrosome forming a ring near parental centrioles. Interacts with CCDC57; the interaction is required for their location to proximal end of centrioles. Interacts with FXR1; promoting its stabilization. As to quaternary structure, (Microbial infection) Interacts with zika virus serine protease NS3; this interaction disorganizes the centrosome. Polyubiquitinated via 'Lys-48'-linked ubiquitin, leading to its degradation. Deubiquitinated by USP36, promoting its stabilization.

It is found in the cytoplasm. It localises to the cytoskeleton. The protein resides in the microtubule organizing center. The protein localises to the centrosome. Its subcellular location is the centriole. It is found in the centriolar satellite. Its function is as follows. Required for normal spindle assembly. Plays a key role in mother-centriole-dependent centriole duplication; the function seems also to involve CEP152, CDK5RAP2 and WDR62 through a stepwise assembled complex at the centrosome that recruits CDK2 required for centriole duplication. Reported to be required for centrosomal recruitment of CEP152; however, this function has been questioned. Also recruits CDK1 to centrosomes. Plays a role in DNA damage response. Following DNA damage, such as double-strand breaks (DSBs), is removed from centrosomes; this leads to the inactivation of spindle assembly and delay in mitotic progression. Promotes stabilization of FXR1 protein by inhibiting FXR1 ubiquitination. This Homo sapiens (Human) protein is Centrosomal protein of 63 kDa.